The following is a 72-amino-acid chain: Protein Kish (72 aa).

A signal peptide spans 1–26; that stretch reads MSALFNFRSLLQVILLLICSCSYVHG. Residues 27–53 lie on the Lumenal side of the membrane; that stretch reads QWPSLLDRYKNHEVLGAFWKMARVGER. The chain crosses the membrane as a helical span at residues 54–72; it reads ASPYVSLACILMAISQFNS.

Belongs to the KISH family.

It localises to the endoplasmic reticulum membrane. The protein resides in the golgi apparatus membrane. In terms of biological role, involved in the early part of the secretory pathway. This Saccharomyces cerevisiae (strain ATCC 204508 / S288c) (Baker's yeast) protein is Protein Kish.